A 194-amino-acid polypeptide reads, in one-letter code: Methylthioribulose-1-phosphate dehydratase (194 aa).

Residues His84 and His86 each coordinate Zn(2+).

The protein belongs to the aldolase class II family. MtnB subfamily. Requires Zn(2+) as cofactor.

It catalyses the reaction 5-(methylsulfanyl)-D-ribulose 1-phosphate = 5-methylsulfanyl-2,3-dioxopentyl phosphate + H2O. It participates in amino-acid biosynthesis; L-methionine biosynthesis via salvage pathway; L-methionine from S-methyl-5-thio-alpha-D-ribose 1-phosphate: step 2/6. Catalyzes the dehydration of methylthioribulose-1-phosphate (MTRu-1-P) into 2,3-diketo-5-methylthiopentyl-1-phosphate (DK-MTP-1-P). This chain is Methylthioribulose-1-phosphate dehydratase, found in Cronobacter sakazakii (Enterobacter sakazakii).